A 398-amino-acid chain; its full sequence is MIAASLRRMITHPAAGGVLLFAAALAAIVMANTDARALYNAIIYFPAQSASATPSHLSLLVLVNDGLMAVFFLAVGLEVKYELLQGALNSRVRAAFPAIAALGGMVAPAVIYSLMTAGTPALRAGWAIPAATDIAFAVGVLALLGTRVPVSLKVFMLALAIIDDLGAIVIIALFYNTALEPLALAAAGAVIGIMALMNRANVRFLSLYLLLGAVLWGCILLSGIHATLAGVVVGGLIPLTLPSTEVSPARALEHWLQPWVVYLILPLFAFANAGISLQGVAPGHLISFLPLGIAAGLVVGKPLGIVLFTAVAVKLRLARLPAGIAFRHIAAAAMLCGIGFTMSIFIANLAFGHDDPETIVLAKVGILSGSVIAALLGYLLLRAILPQPQGSGSVPVGG.

Helical transmembrane passes span 9–29, 57–77, 95–115, 124–144, 154–174, 177–197, 204–224, 226–246, 255–275, 288–308, 329–349, and 359–379; these read MITH…AAIV, LSLL…AVGL, AFPA…YSLM, AGWA…LALL, VFML…IALF, TALE…MALM, FLSL…LSGI, ATLA…STEV, WLQP…NAGI, FLPL…IVLF, IAAA…IANL, and IVLA…LGYL.

The protein belongs to the NhaA Na(+)/H(+) (TC 2.A.33) antiporter family.

It localises to the cell inner membrane. It catalyses the reaction Na(+)(in) + 2 H(+)(out) = Na(+)(out) + 2 H(+)(in). Na(+)/H(+) antiporter that extrudes sodium in exchange for external protons. In Sodalis glossinidius (strain morsitans), this protein is Na(+)/H(+) antiporter NhaA.